The following is a 527-amino-acid chain: Tubulin-specific chaperone E (527 aa).

Residue S2 is modified to N-acetylserine. One can recognise a CAP-Gly domain in the interval 27 to 71; it reads GVVPPVAGPWLGVEWDNPERGKHDGSHEGTVYFKCRHPTGGSFIR. LRR repeat units lie at residues 154–175, 180–200, 205–226, 230–252, 253–274, 278–299, and 308–329; these read NIRK…IHIA, HLEV…SVLT, VLKV…RCVA, GLEE…DVLQ, TVKL…YLIA, RLEQ…DAGI, and SLKY…NELE. The 43-residue stretch at 342–384 folds into the LRRCT domain; that stretch reads NPLTKEDKEAETARLLIIASIGQLKTLNKCEILPEERRRAELD. N6-acetyllysine is present on K463. S495 is subject to Phosphoserine.

This sequence belongs to the TBCE family. In terms of assembly, supercomplex made of cofactors A to E. Cofactors A and D function by capturing and stabilizing tubulin in a quasi-native conformation. Cofactor E binds to the cofactor D-tubulin complex; interaction with cofactor C then causes the release of tubulin polypeptides that are committed to the native state. Cofactors B and E can form a heterodimer which binds to alpha-tubulin and enhances their ability to dissociate tubulin heterodimers. Interacts with TBCD.

It is found in the cytoplasm. The protein localises to the cytoskeleton. Functionally, tubulin-folding protein; involved in the second step of the tubulin folding pathway and in the regulation of tubulin heterodimer dissociation. Required for correct organization of microtubule cytoskeleton and mitotic splindle, and maintenance of the neuronal microtubule network. The polypeptide is Tubulin-specific chaperone E (TBCE) (Homo sapiens (Human)).